A 194-amino-acid polypeptide reads, in one-letter code: CASP-like protein 2C1 (194 aa).

The Cytoplasmic portion of the chain corresponds to 1 to 18; sequence MSSYMEAAAAARAAEAKT. Residues 19–39 form a helical membrane-spanning segment; it reads EGLLRGACALLAAAAALLVGL. At 40-59 the chain is on the extracellular side; it reads NTQTETVLFIRKKATVKDVQ. Residues 60-80 traverse the membrane as a helical segment; it reads ALWVLAMAAAAAAGYHLLQLL. Over 81–109 the chain is Cytoplasmic; sequence RCFYLSRFADGKPCRHRRAIAWLCFLLDK. A helical transmembrane segment spans residues 110-130; it reads GCAYITFATTVAAAQACVVAL. At 131-151 the chain is on the extracellular side; that stretch reads YGTHALQWTKLCNIYTRFCEQ. A helical membrane pass occupies residues 152–172; it reads VAGSLVCAMLAAVGTALLSVV. Topologically, residues 173 to 194 are cytoplasmic; sequence SARNLFRLYPSMLSPPPSSFVG.

Belongs to the Casparian strip membrane proteins (CASP) family. As to quaternary structure, homodimer and heterodimers.

The protein localises to the cell membrane. This Oryza sativa subsp. japonica (Rice) protein is CASP-like protein 2C1.